The primary structure comprises 172 residues: NAD(P)H-quinone oxidoreductase subunit I, chloroplastic (172 aa).

4Fe-4S ferredoxin-type domains are found at residues 55 to 84 (GRIH…VDWK) and 95 to 124 (LNYS…MTEE). Residues Cys64, Cys67, Cys70, Cys74, Cys104, Cys107, Cys110, and Cys114 each contribute to the [4Fe-4S] cluster site.

This sequence belongs to the complex I 23 kDa subunit family. NDH is composed of at least 16 different subunits, 5 of which are encoded in the nucleus. Requires [4Fe-4S] cluster as cofactor.

It is found in the plastid. It localises to the chloroplast thylakoid membrane. It catalyses the reaction a plastoquinone + NADH + (n+1) H(+)(in) = a plastoquinol + NAD(+) + n H(+)(out). It carries out the reaction a plastoquinone + NADPH + (n+1) H(+)(in) = a plastoquinol + NADP(+) + n H(+)(out). NDH shuttles electrons from NAD(P)H:plastoquinone, via FMN and iron-sulfur (Fe-S) centers, to quinones in the photosynthetic chain and possibly in a chloroplast respiratory chain. The immediate electron acceptor for the enzyme in this species is believed to be plastoquinone. Couples the redox reaction to proton translocation, and thus conserves the redox energy in a proton gradient. This Crucihimalaya wallichii (Rock-cress) protein is NAD(P)H-quinone oxidoreductase subunit I, chloroplastic.